The sequence spans 322 residues: HPr kinase/phosphorylase (322 aa).

Residues histidine 146 and lysine 167 contribute to the active site. Glycine 161–serine 168 contacts ATP. Serine 168 is a binding site for Mg(2+). The active-site Proton acceptor; for phosphorylation activity. Proton donor; for dephosphorylation activity is aspartate 185. The segment at leucine 209–aspartate 218 is important for the catalytic mechanism of both phosphorylation and dephosphorylation. Glutamate 210 provides a ligand contact to Mg(2+). Arginine 250 is an active-site residue. The important for the catalytic mechanism of dephosphorylation stretch occupies residues glutamine 271–arginine 276.

Belongs to the HPrK/P family. Homohexamer. Mg(2+) serves as cofactor.

It carries out the reaction [HPr protein]-L-serine + ATP = [HPr protein]-O-phospho-L-serine + ADP + H(+). The enzyme catalyses [HPr protein]-O-phospho-L-serine + phosphate + H(+) = [HPr protein]-L-serine + diphosphate. In terms of biological role, catalyzes the ATP- as well as the pyrophosphate-dependent phosphorylation of a specific serine residue in HPr, a phosphocarrier protein of the phosphoenolpyruvate-dependent sugar phosphotransferase system (PTS). HprK/P also catalyzes the pyrophosphate-producing, inorganic phosphate-dependent dephosphorylation (phosphorolysis) of seryl-phosphorylated HPr (P-Ser-HPr). This is HPr kinase/phosphorylase from Burkholderia ambifaria (strain ATCC BAA-244 / DSM 16087 / CCUG 44356 / LMG 19182 / AMMD) (Burkholderia cepacia (strain AMMD)).